Here is a 211-residue protein sequence, read N- to C-terminus: Guanylate kinase (211 aa).

The Guanylate kinase-like domain maps to 5–184 (GLLIVFSGPS…AAERVKRIIE (180 aa)). Position 12 to 19 (12 to 19 (GPSGVGKG)) interacts with ATP.

Belongs to the guanylate kinase family.

It is found in the cytoplasm. The enzyme catalyses GMP + ATP = GDP + ADP. In terms of biological role, essential for recycling GMP and indirectly, cGMP. This chain is Guanylate kinase, found in Streptococcus pyogenes serotype M3 (strain SSI-1).